Reading from the N-terminus, the 194-residue chain is Translation machinery-associated protein 22 (194 aa).

The region spanning 102–173 (VQIKRVERNK…DVQEWLLEVY (72 aa)) is the SUI1 domain.

It belongs to the DENR family. In terms of assembly, interacts with the 40S ribosomal subunit.

It is found in the cytoplasm. The chain is Translation machinery-associated protein 22 (tma22) from Aspergillus clavatus (strain ATCC 1007 / CBS 513.65 / DSM 816 / NCTC 3887 / NRRL 1 / QM 1276 / 107).